Reading from the N-terminus, the 312-residue chain is DDRGK domain-containing protein 1 (312 aa).

At 1–2 the chain is on the lumenal side; that stretch reads ME. Residues 3 to 23 traverse the membrane as a helical segment; that stretch reads LIILVGIATALLVVIITLYLL. Residues 24-312 are Cytoplasmic-facing; it reads QKKNAAPETK…ISAGGEEASS (289 aa). The segment covering 59-79 has biased composition (low complexity); it reads NQRNRLRQNAPAAPAGQVAPA. Residues 59-162 form a disordered region; it reads NQRNRLRQNA…RKHQEDLEAE (104 aa). Residues 110 to 162 show a composition bias toward basic and acidic residues; it reads LDEKMGAKKRAKMEAKEQKRLQREQELHDREQRKVKEAKEEAERKHQEDLEAE.

It belongs to the DDRGK1 family. As to quaternary structure, interacts with Atg9; the interaction is transient.

The protein localises to the endoplasmic reticulum membrane. Substrate adapter for ufmylation, the covalent attachment of the ubiquitin-like modifier UFM1 to substrate proteins. Required for ufmylation of Atg9; protects the nervous system during aging, possibly by stabilizing Atg9 and supporting its function. This chain is DDRGK domain-containing protein 1, found in Drosophila yakuba (Fruit fly).